Consider the following 1489-residue polypeptide: WD repeat-containing protein 7 (1489 aa).

7 WD repeats span residues 17 to 56 (APTHCISSILLTDDGGTIVTGCHDGQICLWDVSVELEVNP), 62 to 104 (GHTA…CIEF), 156 to 199 (ISPD…SGMQ), 324 to 366 (VICP…EKQE), 404 to 443 (NEPLKVTASVYIPAHGRLVCGREDGSIIIVPATQTAIVQL), 462 to 507 (GHRN…MKHI), and 558 to 597 (RHLFPIQVIKWRPSDDYLVVGCTDGSVYVWQMDTGALDRC). Disordered regions lie at residues 754 to 783 (IKEHLLDEEEDEEEARRQSREDSDPEYRAS) and 911 to 947 (GDHMKKGPTRPPRPGTPDLSKARDSPPPSSNIVQGQI). Residues 767–782 (EARRQSREDSDPEYRA) are compositionally biased toward basic and acidic residues. At S935 the chain carries Phosphoserine. WD repeat units lie at residues 1350 to 1389 (PAICRFYMVSYYERSHRIAVGARHGSVALYDIRTGKCQTI) and 1391 to 1431 (GHKG…LGSI). S1455 carries the phosphoserine modification.

The polypeptide is WD repeat-containing protein 7 (Wdr7) (Mus musculus (Mouse)).